Consider the following 103-residue polypeptide: NAD(P)H-quinone oxidoreductase subunit 4L (103 aa).

A run of 3 helical transmembrane segments spans residues 5 to 25 (LQYC…GLIT), 32 to 52 (VLMS…GFSN), and 66 to 86 (IFVI…VLAI).

The protein belongs to the complex I subunit 4L family. In terms of assembly, NDH-1 can be composed of about 15 different subunits; different subcomplexes with different compositions have been identified which probably have different functions.

The protein resides in the cellular thylakoid membrane. The catalysed reaction is a plastoquinone + NADH + (n+1) H(+)(in) = a plastoquinol + NAD(+) + n H(+)(out). The enzyme catalyses a plastoquinone + NADPH + (n+1) H(+)(in) = a plastoquinol + NADP(+) + n H(+)(out). Its function is as follows. NDH-1 shuttles electrons from an unknown electron donor, via FMN and iron-sulfur (Fe-S) centers, to quinones in the respiratory and/or the photosynthetic chain. The immediate electron acceptor for the enzyme in this species is believed to be plastoquinone. Couples the redox reaction to proton translocation, and thus conserves the redox energy in a proton gradient. Cyanobacterial NDH-1 also plays a role in inorganic carbon-concentration. The sequence is that of NAD(P)H-quinone oxidoreductase subunit 4L from Synechocystis sp. (strain ATCC 27184 / PCC 6803 / Kazusa).